Consider the following 120-residue polypeptide: MFILKGYDSFLVFLIIACLIPVLALSASKLVRPKFGGPEKYTTYESGIEPMGEAWVQFNIRYYMFALVFVIFDVETVFLYPWAVSFAQMGFISFLEALVFLSILIVGLVYAWRKGALEWS.

Transmembrane regions (helical) follow at residues 10 to 30 (FLVF…ASKL), 64 to 84 (MFAL…PWAV), and 89 to 109 (MGFI…VGLV).

This sequence belongs to the complex I subunit 3 family. As to quaternary structure, NDH is composed of at least 16 different subunits, 5 of which are encoded in the nucleus.

It is found in the plastid. Its subcellular location is the chloroplast thylakoid membrane. It catalyses the reaction a plastoquinone + NADH + (n+1) H(+)(in) = a plastoquinol + NAD(+) + n H(+)(out). The catalysed reaction is a plastoquinone + NADPH + (n+1) H(+)(in) = a plastoquinol + NADP(+) + n H(+)(out). Its function is as follows. NDH shuttles electrons from NAD(P)H:plastoquinone, via FMN and iron-sulfur (Fe-S) centers, to quinones in the photosynthetic chain and possibly in a chloroplast respiratory chain. The immediate electron acceptor for the enzyme in this species is believed to be plastoquinone. Couples the redox reaction to proton translocation, and thus conserves the redox energy in a proton gradient. The protein is NAD(P)H-quinone oxidoreductase subunit 3, chloroplastic of Chlorokybus atmophyticus (Soil alga).